The sequence spans 112 residues: Putative RNase TTE0752 (112 aa).

Catalysis depends on residues R74 and H79. The RX(4)HXY motif motif lies at 74-81; sequence RDKLIHEY. At Y81 the chain carries O-di-AMP-tyrosine.

This sequence belongs to the HepT RNase toxin family. Homodimer, probably forms a complex with cognate antitoxin TTE0751. Modified by cognate antitoxin TTE0751; probably at least 2 successive AMPylation events occur on Tyr-81.

In terms of biological role, probable toxic component of a putative type VII toxin-antitoxin (TA) system, probably an RNase. Probably neutralized by cognate antitoxin TTE0751. Neutralization may be due to AMPylation by TTE0751. The sequence is that of Putative RNase TTE0752 from Caldanaerobacter subterraneus subsp. tengcongensis (strain DSM 15242 / JCM 11007 / NBRC 100824 / MB4) (Thermoanaerobacter tengcongensis).